A 248-amino-acid polypeptide reads, in one-letter code: Protein maestro (248 aa).

The tract at residues 1–21 (MDQRQRRILGQPLSIPTSQPK) is disordered. The stretch at 128–163 (SFFIDITLQTRTLLDDENDSLRYSAFVLFGQLAAFA) is one HEAT repeat.

Ubiquitous.

It localises to the nucleus. The protein resides in the nucleolus. The protein is Protein maestro (MRO) of Homo sapiens (Human).